We begin with the raw amino-acid sequence, 614 residues long: Chaperone protein DnaK (614 aa).

Thr175 bears the Phosphothreonine; by autocatalysis mark. Residues 577–614 (QAGGAEGAADPNAAAGGAQSAPHDDNVVDADFKVDEDK) form a disordered region. Positions 583-597 (GAADPNAAAGGAQSA) are enriched in low complexity. Residues 598–614 (PHDDNVVDADFKVDEDK) are compositionally biased toward basic and acidic residues.

This sequence belongs to the heat shock protein 70 family.

Its function is as follows. Acts as a chaperone. This chain is Chaperone protein DnaK, found in Clostridium beijerinckii (strain ATCC 51743 / NCIMB 8052) (Clostridium acetobutylicum).